Here is a 210-residue protein sequence, read N- to C-terminus: Probable transcriptional regulator ycf29 (210 aa).

The 117-residue stretch at 3 to 119 (NILILDTDIG…ELVVIIEGVL (117 aa)) folds into the Response regulatory domain. Position 52 is a 4-aspartylphosphate (D52). The region spanning 142–207 (SNNLKINFTP…ELVKYALENN (66 aa)) is the HTH luxR-type domain.

The protein resides in the plastid. Its subcellular location is the cyanelle. This Cyanophora paradoxa protein is Probable transcriptional regulator ycf29 (ycf29).